A 251-amino-acid polypeptide reads, in one-letter code: Isoprenyl transferase (251 aa).

Residue Asp-24 is part of the active site. Mg(2+) is bound at residue Asp-24. Substrate is bound by residues 25-28 (GNGR), Trp-29, Arg-37, His-41, and 69-71 (STE). Residue Asn-72 is the Proton acceptor of the active site. Substrate-binding positions include Trp-73, Arg-75, Arg-186, and 192 to 194 (RIS). A Mg(2+)-binding site is contributed by Glu-205.

The protein belongs to the UPP synthase family. As to quaternary structure, homodimer. Requires Mg(2+) as cofactor.

In terms of biological role, catalyzes the condensation of isopentenyl diphosphate (IPP) with allylic pyrophosphates generating different type of terpenoids. In Chromobacterium violaceum (strain ATCC 12472 / DSM 30191 / JCM 1249 / CCUG 213 / NBRC 12614 / NCIMB 9131 / NCTC 9757 / MK), this protein is Isoprenyl transferase.